The following is a 218-amino-acid chain: Charged multivesicular body protein 6 (218 aa).

Coiled-coil stretches lie at residues glutamate 15 to valine 42 and glutamine 70 to tyrosine 172.

Belongs to the SNF7 family. Probable core component of the endosomal sorting required for transport complex III (ESCRT-III).

The protein resides in the endosome membrane. Its function is as follows. Probable core component of the endosomal sorting required for transport complex III (ESCRT-III) which is involved in multivesicular bodies (MVBs) formation and sorting of endosomal cargo proteins into MVBs. MVBs contain intraluminal vesicles (ILVs) that are generated by invagination and scission from the limiting membrane of the endosome and are delivered to lysosomes enabling degradation of membrane proteins. The polypeptide is Charged multivesicular body protein 6 (chmp6) (Dictyostelium discoideum (Social amoeba)).